A 298-amino-acid chain; its full sequence is Protease HtpX homolog (298 aa).

2 consecutive transmembrane segments (helical) span residues 14–34 and 39–59; these read VVLL…AGYL and YAMG…SMIF. His-143 is a binding site for Zn(2+). Glu-144 is a catalytic residue. His-147 is a binding site for Zn(2+). 2 helical membrane passes run 158-178 and 197-217; these read IAVA…RMLW and IITL…ASLI. Glu-226 is a Zn(2+) binding site.

The protein belongs to the peptidase M48B family. The cofactor is Zn(2+).

It is found in the cell membrane. The chain is Protease HtpX homolog from Streptococcus pyogenes serotype M6 (strain ATCC BAA-946 / MGAS10394).